The primary structure comprises 501 residues: Glycosyltransferase family 92 protein F13G3.3 (501 aa).

A helical membrane pass occupies residues 10–30; the sequence is LSVVLLFSFLFFVTAVLLQFI. Positions 151–439 constitute a GT92 domain; sequence KPVVMCISPL…ISDCYKQSYY (289 aa).

It belongs to the glycosyltransferase 92 family.

The protein resides in the membrane. The chain is Glycosyltransferase family 92 protein F13G3.3 from Caenorhabditis elegans.